The chain runs to 276 residues: Orotidine 5'-phosphate decarboxylase (276 aa).

Lys-96 serves as the catalytic Proton donor.

It belongs to the OMP decarboxylase family. Type 2 subfamily.

It catalyses the reaction orotidine 5'-phosphate + H(+) = UMP + CO2. Its pathway is pyrimidine metabolism; UMP biosynthesis via de novo pathway; UMP from orotate: step 2/2. The chain is Orotidine 5'-phosphate decarboxylase from Porphyromonas gingivalis (strain ATCC 33277 / DSM 20709 / CIP 103683 / JCM 12257 / NCTC 11834 / 2561).